Reading from the N-terminus, the 456-residue chain is Bifunctional protein GlmU (456 aa).

The pyrophosphorylase stretch occupies residues 1 to 229 (MTKKALSAVI…VMEVEGANNR (229 aa)). UDP-N-acetyl-alpha-D-glucosamine contacts are provided by residues 11 to 14 (LAAG), Lys-25, Gln-76, 81 to 82 (GT), 103 to 105 (YGD), Gly-140, Glu-154, Asn-169, and Asn-227. Mg(2+) is bound at residue Asp-105. Asn-227 is a Mg(2+) binding site. A linker region spans residues 230–250 (LQLAALERYFQNKQASKLLLE). An N-acetyltransferase region spans residues 251–456 (GVMIYDPARF…QGWQRPIKKK (206 aa)). UDP-N-acetyl-alpha-D-glucosamine contacts are provided by Arg-333 and Lys-351. Catalysis depends on His-363, which acts as the Proton acceptor. UDP-N-acetyl-alpha-D-glucosamine contacts are provided by Tyr-366 and Asn-377. Acetyl-CoA-binding positions include Ala-380, 386-387 (NY), Ser-405, Ala-423, and Arg-440.

It in the N-terminal section; belongs to the N-acetylglucosamine-1-phosphate uridyltransferase family. The protein in the C-terminal section; belongs to the transferase hexapeptide repeat family. As to quaternary structure, homotrimer. Mg(2+) serves as cofactor.

Its subcellular location is the cytoplasm. The enzyme catalyses alpha-D-glucosamine 1-phosphate + acetyl-CoA = N-acetyl-alpha-D-glucosamine 1-phosphate + CoA + H(+). It catalyses the reaction N-acetyl-alpha-D-glucosamine 1-phosphate + UTP + H(+) = UDP-N-acetyl-alpha-D-glucosamine + diphosphate. The protein operates within nucleotide-sugar biosynthesis; UDP-N-acetyl-alpha-D-glucosamine biosynthesis; N-acetyl-alpha-D-glucosamine 1-phosphate from alpha-D-glucosamine 6-phosphate (route II): step 2/2. It participates in nucleotide-sugar biosynthesis; UDP-N-acetyl-alpha-D-glucosamine biosynthesis; UDP-N-acetyl-alpha-D-glucosamine from N-acetyl-alpha-D-glucosamine 1-phosphate: step 1/1. Its pathway is bacterial outer membrane biogenesis; LPS lipid A biosynthesis. Catalyzes the last two sequential reactions in the de novo biosynthetic pathway for UDP-N-acetylglucosamine (UDP-GlcNAc). The C-terminal domain catalyzes the transfer of acetyl group from acetyl coenzyme A to glucosamine-1-phosphate (GlcN-1-P) to produce N-acetylglucosamine-1-phosphate (GlcNAc-1-P), which is converted into UDP-GlcNAc by the transfer of uridine 5-monophosphate (from uridine 5-triphosphate), a reaction catalyzed by the N-terminal domain. This chain is Bifunctional protein GlmU, found in Haemophilus influenzae (strain ATCC 51907 / DSM 11121 / KW20 / Rd).